The chain runs to 380 residues: Tryptophan--tRNA ligase 2 (380 aa).

The 'HIGH' region signature appears at P74–H82. Positions K249–S253 match the 'KMSKS' region motif.

Belongs to the class-I aminoacyl-tRNA synthetase family.

It localises to the cytoplasm. The catalysed reaction is tRNA(Trp) + L-tryptophan + ATP = L-tryptophyl-tRNA(Trp) + AMP + diphosphate + H(+). The sequence is that of Tryptophan--tRNA ligase 2 from Halobacterium salinarum (strain ATCC 700922 / JCM 11081 / NRC-1) (Halobacterium halobium).